Here is a 247-residue protein sequence, read N- to C-terminus: Serine/threonine-protein phosphatase 2A activator (247 aa).

Belongs to the PTPA-type PPIase family.

The protein localises to the cytoplasm. The catalysed reaction is [protein]-peptidylproline (omega=180) = [protein]-peptidylproline (omega=0). Its function is as follows. PPIases accelerate the folding of proteins. It catalyzes the cis-trans isomerization of proline imidic peptide bonds in oligopeptides. Acts as a regulatory subunit for PP2A-like phosphatases modulating their activity or substrate specificity, probably by inducing a conformational change in the catalytic subunit, a direct target of the PPIase. Can reactivate inactive phosphatase PP2A-phosphatase methylesterase complexes (PP2Ai) in presence of ATP and Mg(2+) by dissociating the inactive form from the complex. This chain is Serine/threonine-protein phosphatase 2A activator, found in Encephalitozoon cuniculi (strain GB-M1) (Microsporidian parasite).